A 360-amino-acid polypeptide reads, in one-letter code: Chorismate synthase (360 aa).

Arginine 47 lines the NADP(+) pocket. Residues 124-126 (RAS), glycine 286, 301-305 (KPTAT), and arginine 327 each bind FMN.

The protein belongs to the chorismate synthase family. As to quaternary structure, homotetramer. FMNH2 serves as cofactor.

It catalyses the reaction 5-O-(1-carboxyvinyl)-3-phosphoshikimate = chorismate + phosphate. It functions in the pathway metabolic intermediate biosynthesis; chorismate biosynthesis; chorismate from D-erythrose 4-phosphate and phosphoenolpyruvate: step 7/7. Its function is as follows. Catalyzes the anti-1,4-elimination of the C-3 phosphate and the C-6 proR hydrogen from 5-enolpyruvylshikimate-3-phosphate (EPSP) to yield chorismate, which is the branch point compound that serves as the starting substrate for the three terminal pathways of aromatic amino acid biosynthesis. This reaction introduces a second double bond into the aromatic ring system. The sequence is that of Chorismate synthase from Synechococcus sp. (strain RCC307).